Consider the following 243-residue polypeptide: HTH-type transcriptional regulator MlrA (243 aa).

The region spanning 3–72 is the HTH merR-type domain; sequence LYTIGEVALL…VSKVKVLLSS (70 aa). The segment at residues 6 to 25 is a DNA-binding region (H-T-H motif); that stretch reads IGEVALLCDINPVTLRAWQR.

Transcriptional activator of csgD, which is required for production of the curli (AgF). This chain is HTH-type transcriptional regulator MlrA, found in Salmonella typhimurium (strain SL1344).